Here is a 267-residue protein sequence, read N- to C-terminus: Short chain dehydrogenase claC (267 aa).

NADP(+)-binding residues include Ile-27, Asp-73, Asn-100, and Arg-133. Catalysis depends on proton donor residues Ser-149 and Ser-150. NADP(+) is bound by residues Tyr-164, Lys-168, and Thr-199. The Proton acceptor role is filled by Tyr-164. The active-site Lowers pKa of active site Tyr is the Lys-168.

Belongs to the short-chain dehydrogenases/reductases (SDR) family.

It functions in the pathway pigment biosynthesis. In terms of biological role, non-reducing polyketide synthase; part of the gene cluster that mediates the biosynthesis of the bianthraquinone cladofulvin, a conidial pigment not required for virulence but that plays a role in fitness and resistance to environmental stresses including UV light and low-temperature stress. The pathway begins with the synthesis of atrochrysone thioester by the polyketide synthase (PKS) claG. The atrochrysone carboxyl ACP thioesterase claF then breaks the thioester bond and releases the atrochrysone carboxylic acid from claG. This compound is decarboxylated by claH to yield emodin, which is further converted to chrysophanol hydroquinone by the reductase claC and the dehydratase claB. The cytochrome monooxygenase P450 claM then catalyzes the dimerization of nataloe-emodin to cladofulvin. The protein is Short chain dehydrogenase claC of Passalora fulva (Tomato leaf mold).